Reading from the N-terminus, the 294-residue chain is Diaminopimelate epimerase (294 aa).

The substrate site is built by N11 and N78. C87 serves as the catalytic Proton donor. Substrate contacts are provided by residues 88 to 89 (GN), N167, N203, and 221 to 222 (ER). The active-site Proton acceptor is the C230. Residue 231 to 232 (GT) participates in substrate binding.

This sequence belongs to the diaminopimelate epimerase family. As to quaternary structure, homodimer.

The protein localises to the cytoplasm. The catalysed reaction is (2S,6S)-2,6-diaminopimelate = meso-2,6-diaminopimelate. It participates in amino-acid biosynthesis; L-lysine biosynthesis via DAP pathway; DL-2,6-diaminopimelate from LL-2,6-diaminopimelate: step 1/1. Its function is as follows. Catalyzes the stereoinversion of LL-2,6-diaminopimelate (L,L-DAP) to meso-diaminopimelate (meso-DAP), a precursor of L-lysine and an essential component of the bacterial peptidoglycan. The sequence is that of Diaminopimelate epimerase from Mycolicibacterium paratuberculosis (strain ATCC BAA-968 / K-10) (Mycobacterium paratuberculosis).